A 159-amino-acid polypeptide reads, in one-letter code: Antitoxin Xre (159 aa).

This sequence belongs to the MbcA/ParS/Xre antitoxin family. Homodimer. Forms a complex with cognate toxin Res; the 2 toxin molecules dimerize and each contacts an Xre homodimer. Most Res-Xre contacts are between the antitoxin molecule closest to the toxin.

Probable antitoxin component of a type II toxin-antitoxin (TA) system. In vivo probably neutralizes the toxic effect of cognate toxin Res. This chain is Antitoxin Xre, found in Pseudomonas putida (strain ATCC 47054 / DSM 6125 / CFBP 8728 / NCIMB 11950 / KT2440).